The primary structure comprises 1933 residues: WD repeat-containing protein 81 (1933 aa).

Positions 1–643 (MAQGSRRRKV…TPCESGWTRE (643 aa)) are necessary and sufficient for the interaction with SQSTM1. Disordered regions lie at residues 305–334 (PSEDENQEVSEEKDRTGVKSEKDGEGRPGC), 663–714 (SIPG…GKIV), 1038–1057 (CAFGEEIQMGGQPAASSGLG), 1090–1209 (QPQE…EGKE), 1517–1544 (SLRNPASMEPVTPSAGPEWNPQSGSCLQ), and 1565–1590 (DSQPQSSGPLGSISGVGSGGLSSRNE). Residues 314–330 (SEEKDRTGVKSEKDGEG) show a composition bias toward basic and acidic residues. The BEACH domain maps to 333–610 (GCPTCQKELR…IPRLLVQPIQ (278 aa)). The span at 668–693 (AGDQPGSSSSQASPGLLPFSAPSGSR) shows a compositional bias: low complexity. Polar residues-rich tracts occupy residues 1100 to 1112 (GQLSDKSSTSEAS) and 1131 to 1140 (VKSGDSSQDL). Over residues 1145-1166 (GSEEEEEEEEGCVVLEEEEQDE) the composition is skewed to acidic residues. 5 WD repeats span residues 1638–1677 (GHTGAVKCVAALSSEDFFLSGSKDRTVRLWPLYNYGDGTS), 1684–1724 (IYAQ…TLRT), 1776–1815 (LNPGLVRSLAVSPSGRSVVAGFSSGFMVLLDTRTGLVLRG), 1818–1856 (AHEGDILQIKAVEGSVIVSSSSDHSLTVWKELEQKPTHH), and 1903–1933 (NFRGTLTSLALLPTKRHLLLGSDNGIIRLLA).

This sequence belongs to the WD repeat WDR81 family. In terms of assembly, interacts with WDR91; involved in early to late endosome cargo transport. Interacts with BECN1; negatively regulates the PI3 kinase/PI3K activity associated with endosomal membranes. Interacts with SQSTM1; the interaction is direct and regulates the interaction of SQSTM1 with ubiquitinated proteins. Interacts with MAP1LC3C; recruits MAP1LC3C to ubiquitinated protein aggregates in the aggrephagy process.

The protein resides in the early endosome membrane. Its subcellular location is the late endosome membrane. The protein localises to the lysosome membrane. It is found in the cytoplasmic vesicle. It localises to the autophagosome membrane. The protein resides in the mitochondrion. Its subcellular location is the cytoplasm. The protein localises to the cytosol. Its function is as follows. Functions as a negative regulator of the PI3 kinase/PI3K activity associated with endosomal membranes via BECN1, a core subunit of the PI3K complex. By modifying the phosphatidylinositol 3-phosphate/PtdInsP3 content of endosomal membranes may regulate endosome fusion, recycling, sorting and early to late endosome transport. It is for instance, required for the delivery of cargos like BST2/tetherin from early to late endosome and thereby participates indirectly to their degradation by the lysosome. May also play a role in aggrephagy, the macroautophagic degradation of ubiquitinated protein aggregates. In this process, may regulate the interaction of SQSTM1 with ubiquitinated proteins and also recruit MAP1LC3C. May also be involved in maintenance of normal mitochondrial structure and organization. The protein is WD repeat-containing protein 81 of Rattus norvegicus (Rat).